The primary structure comprises 1007 residues: Tolloid-like protein 1 (1007 aa).

An N-terminal signal peptide occupies residues 1-25 (MNMPSWLIFLLTGWTFCGNFFACGG). Positions 26-142 (LDYDYPNYEN…GKSKKIRIPR (117 aa)) are excised as a propeptide. A disordered region spans residues 115 to 139 (SGQENTTANSQKVDNNQSGKSKKIR). The segment covering 116–133 (GQENTTANSQKVDNNQSG) has biased composition (polar residues). In terms of domain architecture, Peptidase M12A spans 143-342 (AATSRTERIW…AQARKLYRCP (200 aa)). An N-linked (GlcNAc...) asparagine glycan is attached at N164. Disulfide bonds link C185–C341, C205–C227, C207–C208, and C344–C370. H235 is a binding site for Zn(2+). E236 is an active-site residue. Zn(2+) contacts are provided by H239 and H245. 2 CUB domains span residues 344–456 (CGET…YEAI) and 457–569 (CGGE…FLKE). 2 N-linked (GlcNAc...) asparagine glycosylation sites follow: N354 and N385. 15 disulfide bridges follow: C397–C419, C457–C483, C510–C532, C573–C585, C581–C594, C596–C609, C613–C639, C666–C688, C729–C740, C736–C749, C751–C764, C769–C795, C822–C844, C882–C912, and C939–C961. One can recognise an EGF-like 1; calcium-binding domain in the interval 569-610 (EEDECARPDNGGCEQRCVNTLGSYKCSCDPGYELAPDKKSCE). A CUB 3 domain is found at 613–725 (CGGLLTKLNG…KGFRAHFFSD (113 aa)). The N-linked (GlcNAc...) asparagine glycan is linked to N621. One can recognise an EGF-like 2; calcium-binding domain in the interval 725–765 (DKDECSKDNGGCQHECINTIGSYVCQCRNGFVLHDNKHDCK). 2 consecutive CUB domains span residues 769-881 (CEHR…HSTE) and 882-998 (CGGR…YRSV).

It depends on Zn(2+) as a cofactor.

The protein localises to the secreted. Protease which processes procollagen C-propeptides, such as chordin. Required for the embryonic development. Predominant protease, which in the development, influences dorsal-ventral patterning and skeletogenesis. In Xenopus laevis (African clawed frog), this protein is Tolloid-like protein 1 (tll1).